The sequence spans 1013 residues: Sodium/potassium-transporting ATPase subunit alpha-3 (1013 aa).

Positions 1–10 (MGDKKDDKSS) are enriched in basic and acidic residues. Residues 1–24 (MGDKKDDKSSPKKSKAKERRDLDD) form a disordered region. The Cytoplasmic segment spans residues 1–77 (MGDKKDDKSS…NALTPPPTTP (77 aa)). A phosphoserine mark is found at serine 37 and serine 56. The interval 72–74 (PPP) is interaction with phosphoinositide-3 kinase. The helical transmembrane segment at 78–98 (EWVKFCRQLFGGFSILLWIGA) threads the bilayer. Residues 99 to 121 (ILCFLAYGIQAGTEDDPSGDNLY) are Extracellular-facing. The helical transmembrane segment at 122–142 (LGIVLAAVVIITGCFSYYQEA) threads the bilayer. Residues 143–278 (KSSKIMESFK…VGKTPIAIEI (136 aa)) lie on the Cytoplasmic side of the membrane. Phosphoserine is present on residues serine 218 and serine 265. A helical membrane pass occupies residues 279–298 (EHFIQLITGVAVFLGVSFFI). The Extracellular portion of the chain corresponds to 299 to 310 (LSLILGYTWLEA). The helical transmembrane segment at 311 to 328 (VIFLIGIIVANVPEGLLA) threads the bilayer. The Cytoplasmic segment spans residues 329–762 (TVTVCLTLTA…EEGRLIFDNL (434 aa)). Residue aspartate 366 is the 4-aspartylphosphate intermediate of the active site. Serine 442 is modified (phosphoserine). Tyrosine 548 carries the post-translational modification Phosphotyrosine. Mg(2+) contacts are provided by aspartate 707 and aspartate 711. The helical transmembrane segment at 763–782 (KKSIAYTLTSNIPEITPFLL) threads the bilayer. The Extracellular portion of the chain corresponds to 783 to 792 (FIMANIPLPL). A helical membrane pass occupies residues 793–813 (GTITILCIDLGTDMVPAISLA). Residues 814–833 (YEAAESDIMKRQPRNPRTDK) are Cytoplasmic-facing. Residues 834 to 856 (LVNERLISMAYGQIGMIQALGGF) traverse the membrane as a helical segment. Residues 857 to 908 (FSYFVILAENGFLPGNLVGIRLNWDDRTVNDLEDSYGQQWTYEQRKVVEFTC) lie on the Extracellular side of the membrane. Residues 909-928 (HTAFFVSIVVVQWADLIICK) form a helical membrane-spanning segment. Topologically, residues 929–941 (TRRNSVFQQGMKN) are cytoplasmic. Serine 933 is modified (phosphoserine; by PKA). Residues 942 to 960 (KILIFGLFEETALAAFLSY) form a helical membrane-spanning segment. At 961-975 (CPGMDVALRMYPLKP) the chain is on the extracellular side. The chain crosses the membrane as a helical span at residues 976–996 (SWWFCAFPYSFLIFVYDEIRK). Residues 997–1013 (LILRRNPGGWVEKETYY) are Cytoplasmic-facing.

The protein belongs to the cation transport ATPase (P-type) (TC 3.A.3) family. Type IIC subfamily. In terms of assembly, the sodium/potassium-transporting ATPase is composed of a catalytic alpha subunit, an auxiliary non-catalytic beta subunit and an additional regulatory subunit. Interacts with regulatory subunit FXYD1.

The protein localises to the cell membrane. It catalyses the reaction K(+)(out) + Na(+)(in) + ATP + H2O = K(+)(in) + Na(+)(out) + ADP + phosphate + H(+). In terms of biological role, this is the catalytic component of the active enzyme, which catalyzes the hydrolysis of ATP coupled with the exchange of sodium and potassium ions across the plasma membrane. This action creates the electrochemical gradient of sodium and potassium ions, providing the energy for active transport of various nutrients. In Mus musculus (Mouse), this protein is Sodium/potassium-transporting ATPase subunit alpha-3 (Atp1a3).